Here is an 826-residue protein sequence, read N- to C-terminus: Zinc phosphodiesterase ELAC protein 2 (826 aa).

Residues 1–16 (MWALCSLLRSAAGRTM) constitute a mitochondrion transit peptide. The span at 15-24 (TMSQGRTISQ) shows a compositional bias: polar residues. Disordered stretches follow at residues 15 to 51 (TMSQ…PSGC) and 189 to 231 (QRRG…VSQR). The span at 27–38 (ARRERPRKDPLR) shows a compositional bias: basic and acidic residues. A phosphoserine mark is found at serine 199, serine 208, serine 212, serine 229, serine 618, and serine 736. Over residues 208–224 (SPERSSDSESNENEPHL) the composition is skewed to basic and acidic residues. A disordered region spans residues 798–826 (ELAGGLEDGEPQQKRAHTEEPQAKKVRAQ). Positions 808–820 (PQQKRAHTEEPQA) are enriched in basic and acidic residues.

The protein belongs to the RNase Z family. In terms of assembly, homodimer. Interacts with PTCD1. Zn(2+) serves as cofactor.

It is found in the mitochondrion. Its subcellular location is the mitochondrion matrix. The protein localises to the mitochondrion nucleoid. It localises to the nucleus. The catalysed reaction is Endonucleolytic cleavage of RNA, removing extra 3' nucleotides from tRNA precursor, generating 3' termini of tRNAs. A 3'-hydroxy group is left at the tRNA terminus and a 5'-phosphoryl group is left at the trailer molecule.. Its function is as follows. Zinc phosphodiesterase, which displays mitochondrial tRNA 3'-processing endonuclease activity. Involved in tRNA maturation, by removing a 3'-trailer from precursor tRNA. Associates with mitochondrial DNA complexes at the nucleoids to initiate RNA processing and ribosome assembly. This chain is Zinc phosphodiesterase ELAC protein 2 (ELAC2), found in Gorilla gorilla gorilla (Western lowland gorilla).